A 265-amino-acid polypeptide reads, in one-letter code: NAD kinase 2 (265 aa).

The active-site Proton acceptor is the Asn-51. NAD(+)-binding positions include 122–123 (NE), Arg-149, Asp-151, 162–167 (TAYNKS), Ala-186, and Asn-226.

The protein belongs to the NAD kinase family. The cofactor is a divalent metal cation.

The protein resides in the cytoplasm. It catalyses the reaction NAD(+) + ATP = ADP + NADP(+) + H(+). Involved in the regulation of the intracellular balance of NAD and NADP, and is a key enzyme in the biosynthesis of NADP. Catalyzes specifically the phosphorylation on 2'-hydroxyl of the adenosine moiety of NAD to yield NADP. The sequence is that of NAD kinase 2 from Halalkalibacterium halodurans (strain ATCC BAA-125 / DSM 18197 / FERM 7344 / JCM 9153 / C-125) (Bacillus halodurans).